Consider the following 840-residue polypeptide: E3 ubiquitin-protein ligase SH3RF1 (840 aa).

The RING-type zinc finger occupies 12–53 (CPVCLERLDASAKVLPCQHTFCKRCLLGIVGSRNELRCPECR). Residues 105 to 129 (VTCSPKDGPSSQGGPQPRAQAWSPP) form a disordered region. 2 SH3 domains span residues 134–193 (PQLP…IIKP) and 196–259 (QPPP…FNSA). Disordered regions lie at residues 267–324 (DQPP…RHSM), 394–442 (TLNP…PRPS), 516–545 (GPAS…VAGG), 578–633 (QARS…AASG), 652–723 (AASL…LGAE), and 744–773 (MAPG…SLGP). A compositionally biased stretch (low complexity) spans 273–282 (GVAAGEGALA). The segment covering 283–292 (TTPSSTTTKQ) has biased composition (polar residues). The interval 292–362 (QPDGKKNTKK…APSQVHISTT (71 aa)) is interaction with RAC1. At Ser304 the chain carries Phosphoserine. Low complexity-rich tracts occupy residues 307 to 320 (SLSM…AAQQ) and 405 to 424 (QAAT…GPRP). The interaction with AKT2 stretch occupies residues 434–537 (HPRPQPRPSV…PSTGGPAQKP (104 aa)). In terms of domain architecture, SH3 3 spans 439–500 (PRPSVYVAIY…PGNYVAPVTR (62 aa)). Over residues 616–625 (SPQPPAPLGP) the composition is skewed to pro residues. Basic and acidic residues predominate over residues 681–692 (RPDKDGKKEKKG). Ser709 is modified (phosphoserine). In terms of domain architecture, SH3 4 spans 781–840 (AVCERHRVVVSYPPQSEAELELKEGDIVFVHKKREDGWFKGTLQRNGKTGLFPGSFVENI).

Belongs to the SH3RF family. Interacts with RAC1; in a GTP-dependent manner. Interacts with MAP3K10/MLK2 and MAP3K11/MLK3. Interacts with MAPK8IP; this interaction leads to the PJAC complex (POSH-JIP or SH3RF1/MAPK8IP apoptotic complex) with a 1:1 ratio. Interacts with SIAH1. Interacts with HERP1. Probably part of a signaling complex that may contain SH3RF1, MAPK8IP, DLK1, MAP2K4/MKK4, MAP2K7/MKK7, MAPK8/JNK1, MAPK9/JNK2, AKT1 and AKT2. Found in a complex with RAC2, MAP3K7/TAK1, MAP2K7/MKK7, MAPK8IP1/JIP1, MAPK8/JNK1 and MAPK9/JNK2. Found in a complex with RAC1, MAP3K11/MLK3, MAP2K7/MKK7, MAPK8IP1/JIP1 and MAPK8/JNK1. Interacts with SH3RF2. In terms of processing, phosphorylated at Ser-304 by AKT1 and AKT2. When phosphorylated, it has reduced ability to bind Rac. Post-translationally, autoubiquitinated. Ubiquitinated by SH3RF2, leading to proteasome-mediated degradation.

The protein resides in the cytoplasm. It is found in the perinuclear region. Its subcellular location is the cell projection. It localises to the lamellipodium. The protein localises to the golgi apparatus. The protein resides in the trans-Golgi network. It carries out the reaction S-ubiquitinyl-[E2 ubiquitin-conjugating enzyme]-L-cysteine + [acceptor protein]-L-lysine = [E2 ubiquitin-conjugating enzyme]-L-cysteine + N(6)-ubiquitinyl-[acceptor protein]-L-lysine.. It functions in the pathway protein modification; protein ubiquitination. Functionally, has E3 ubiquitin-protein ligase activity. In the absence of an external substrate, it can catalyze self-ubiquitination. Stimulates ubiquitination of potassium channel KCNJ1, enhancing it's dynamin-dependent and clathrin-independent endocytosis. Acts as a scaffold protein that coordinates with MAPK8IP1/JIP1 in organizing different components of the JNK pathway, including RAC1 or RAC2, MAP3K11/MLK3 or MAP3K7/TAK1, MAP2K7/MKK7, MAPK8/JNK1 and/or MAPK9/JNK2 into a functional multiprotein complex to ensure the effective activation of the JNK signaling pathway. Regulates the differentiation of CD4(+) and CD8(+) T-cells and promotes T-helper 1 (Th1) cell differentiation. Regulates the activation of MAPK8/JNK1 and MAPK9/JNK2 in CD4(+) T-cells and the activation of MAPK8/JNK1 in CD8(+) T-cells. Plays a crucial role in the migration of neocortical neurons in the developing brain. Controls proper cortical neuronal migration and the formation of proximal cytoplasmic dilation in the leading process (PCDLP) in migratory neocortical neurons by regulating the proper localization of activated RAC1 and F-actin assembly. The polypeptide is E3 ubiquitin-protein ligase SH3RF1 (SH3RF1) (Bos taurus (Bovine)).